A 605-amino-acid polypeptide reads, in one-letter code: Elongation factor 4 (605 aa).

Residues 9 to 192 enclose the tr-type G domain; the sequence is HHIRNFCIIA…AIVKRVPAPS (184 aa). Residues 21-26 and 139-142 each bind GTP; these read DHGKST and NKID.

Belongs to the TRAFAC class translation factor GTPase superfamily. Classic translation factor GTPase family. LepA subfamily.

The protein resides in the cell inner membrane. The catalysed reaction is GTP + H2O = GDP + phosphate + H(+). Functionally, required for accurate and efficient protein synthesis under certain stress conditions. May act as a fidelity factor of the translation reaction, by catalyzing a one-codon backward translocation of tRNAs on improperly translocated ribosomes. Back-translocation proceeds from a post-translocation (POST) complex to a pre-translocation (PRE) complex, thus giving elongation factor G a second chance to translocate the tRNAs correctly. Binds to ribosomes in a GTP-dependent manner. The chain is Elongation factor 4 from Chlorobium phaeobacteroides (strain DSM 266 / SMG 266 / 2430).